The chain runs to 510 residues: MSHRERDRDRDRDSDRDRDRNRYSRSRSRGSRSRSRSRSRSRDRNRNRDYNKDRSSNRDSYYNDRDYKKDRSSNRDRDYYDRDRNRDYKNSSSGSSSGGGGGGSGENYTVKSSSYRESNSNNSKVEIQKQENISKDYFIDNKGVNNSIERKDNIKNENNNNNSFDNRKAEFNNNSYGEKKEFDNNNNRNYHGGNSRYVNNNNNNNNNNYNNNNNKSNYNGTDFFEYRKKLREEATCFSVYERSPSPPKKGELEEIDDQFLSNKKKSKKSRRKSSSNSDSSSSDSDSDSSRSREKRKKSKSRKDKKKRKEKKKHQRKSSKRSSKYSDSDSDSDSSFSDSDYSDSDRSDSEGRSRKKRSKKRSKKRHDHHKESVHDASMWEEKVEQQTQTLSNRDIGPKPISEVQVGSYGGAMMPGEAEAIAQFVKENKRIPRRGEVGLTSEQIASFEETGYVMSGSRHRRMNAVRIRKESQVYSAEEQKALAMLNREEKAKRENRLLADFRDLINTKLQAD.

Over residues M1–R22 the composition is skewed to basic and acidic residues. Disordered regions lie at residues M1–Q128, E149–G220, and V239–E401. Basic residues predominate over residues Y23–S39. Residues R40–K89 show a composition bias toward basic and acidic residues. A compositionally biased stretch (gly residues) spans S96 to G105. Low complexity-rich tracts occupy residues S112 to S123 and N184 to N219. Residues N262–S273 show a composition bias toward basic residues. The segment covering S274–D283 has biased composition (low complexity). The span at R292–S322 shows a compositional bias: basic residues. Residues D342–R351 are compositionally biased toward basic and acidic residues. Basic residues predominate over residues S352–H367. Basic and acidic residues predominate over residues H368–E383.

Belongs to the NKAP family.

The polypeptide is NKAP family protein (Dictyostelium discoideum (Social amoeba)).